Consider the following 485-residue polypeptide: Putative aldehyde dehydrogenase AldY (485 aa).

Position 231–236 (231–236) interacts with NAD(+); sequence GSTAVG. Residues glutamate 253 and cysteine 287 contribute to the active site.

The protein belongs to the aldehyde dehydrogenase family.

It catalyses the reaction an aldehyde + NAD(+) + H2O = a carboxylate + NADH + 2 H(+). In terms of biological role, may contribute to protect cells against stress due to ethanol and related compounds. The sequence is that of Putative aldehyde dehydrogenase AldY (aldY) from Bacillus subtilis (strain 168).